Reading from the N-terminus, the 815-residue chain is Probable AMP deaminase (815 aa).

A helical membrane pass occupies residues 5–27; that stretch reads YALHLAVATLLGASFAAASAYYM. Disordered stretches follow at residues 53-116 and 144-173; these read LLDA…PVPT and LLTN…STNM. Residues 105–116 are compositionally biased toward low complexity; it reads VRPTTPRSPVPT. Polar residues predominate over residues 159–173; the sequence is ASQNGDTKPVPSTNM. Residues His367 and His369 each contribute to the Zn(2+) site. Residues His369 and 438 to 443 contribute to the substrate site; that span reads KFNLKY. Position 635 (His635) interacts with Zn(2+). Position 638 (Glu638) interacts with substrate. The active-site Proton acceptor is the His657. Asp712 is a binding site for Zn(2+). Position 713-716 (713-716) interacts with substrate; the sequence is DPLQ.

It belongs to the metallo-dependent hydrolases superfamily. Adenosine and AMP deaminases family. In terms of assembly, homodimer. The cofactor is Zn(2+).

The protein resides in the membrane. It carries out the reaction AMP + H2O + H(+) = IMP + NH4(+). It functions in the pathway purine metabolism; IMP biosynthesis via salvage pathway; IMP from AMP: step 1/1. AMP deaminase plays a critical role in energy metabolism. This chain is Probable AMP deaminase (AMPD), found in Oryza sativa subsp. japonica (Rice).